The primary structure comprises 272 residues: Imidazole glycerol phosphate synthase subunit HisF (272 aa).

Active-site residues include aspartate 11 and aspartate 130.

The protein belongs to the HisA/HisF family. Heterodimer of HisH and HisF.

It localises to the cytoplasm. The enzyme catalyses 5-[(5-phospho-1-deoxy-D-ribulos-1-ylimino)methylamino]-1-(5-phospho-beta-D-ribosyl)imidazole-4-carboxamide + L-glutamine = D-erythro-1-(imidazol-4-yl)glycerol 3-phosphate + 5-amino-1-(5-phospho-beta-D-ribosyl)imidazole-4-carboxamide + L-glutamate + H(+). The protein operates within amino-acid biosynthesis; L-histidine biosynthesis; L-histidine from 5-phospho-alpha-D-ribose 1-diphosphate: step 5/9. Functionally, IGPS catalyzes the conversion of PRFAR and glutamine to IGP, AICAR and glutamate. The HisF subunit catalyzes the cyclization activity that produces IGP and AICAR from PRFAR using the ammonia provided by the HisH subunit. In Methanococcus vannielii (strain ATCC 35089 / DSM 1224 / JCM 13029 / OCM 148 / SB), this protein is Imidazole glycerol phosphate synthase subunit HisF.